The following is a 452-amino-acid chain: MIDFIDYIQLSFSDATRWNRDNSYTALTDTANALLDFSIPERLRVHLSSLSTPQFATTYTLGTVGLIDGSISYLFSTLPLQTTQSRSTLIPLRKLVPGYRQIHPPLAPESWDSDGPGHEGSDGQEDETTPWKRRRETLLHAILHLPPPTTLNGLFLRRLSPTTQLSVAVCSTQAKPLSKSTPQASILTQLSHDTGKYSAEFLFSTDNALLGFKGLYNFGPDPRDRTNAQRPQRASQSVSLLSAGGEMYYSPLSSVVGLSTGLRFTTLPAASETLHSPSSSAYPAPSPISTFPYTLTLTLTPLTGSLSTTYSLLASPNLAFSSRFGFNVYSWESEMVAGCELWRQKRKPYPYVSGEKDDLAWAKRKMGLLPPLPAPPTPAKRMDLTAGAGESVESDSVIKLRVDQSLNIRLLWEGRVKDLLVSAGVGLGPTSLSTGGAAYGWTGVGVSVLYST.

The segment at Pro105–Pro130 is disordered.

The protein belongs to the MDM10 family. As to quaternary structure, component of the ER-mitochondria encounter structure (ERMES) or MDM complex, composed of MMM1, MDM10, MDM12 and MDM34. Associates with the mitochondrial outer membrane sorting assembly machinery SAM(core) complex.

The protein resides in the mitochondrion outer membrane. Functionally, component of the ERMES/MDM complex, which serves as a molecular tether to connect the endoplasmic reticulum and mitochondria. Components of this complex are involved in the control of mitochondrial shape and protein biogenesis and may function in phospholipid exchange. MDM10 is involved in the late assembly steps of the general translocase of the mitochondrial outer membrane (TOM complex). Functions in the TOM40-specific route of the assembly of outer membrane beta-barrel proteins, including the association of TOM40 with the receptor TOM22 and small TOM proteins. Can associate with the SAM(core) complex as well as the MDM12-MMM1 complex, both involved in late steps of the major beta-barrel assembly pathway, that is responsible for biogenesis of all outer membrane beta-barrel proteins. May act as a switch that shuttles between both complexes and channels precursor proteins into the TOM40-specific pathway. Plays a role in mitochondrial morphology and in the inheritance of mitochondria. This chain is Mitochondrial distribution and morphology protein 10, found in Uncinocarpus reesii (strain UAMH 1704).